The primary structure comprises 347 residues: NADH-ubiquinone oxidoreductase chain 2 (347 aa).

10 helical membrane passes run 13-33 (IFAGTLITALSSHWFFTWVGL), 56-76 (AIKYFLTQATASMILLMAILF), 96-116 (LMIMMAMAMKLGMAPFHFWVP), 123-143 (PLTSGLLLLTWQKLAPISIMY), 149-169 (LNVSLLLTLSILSIMAGSWGG), 178-198 (ILAYSSITHMGWMMAVLPYNP), 201-221 (TILNLTIYIILTTTAFLLLNL), 247-267 (TLLSLGGLPPLTGFLPKWAII), 274-294 (NSLIIPTIMATITLLNLYFYL), and 326-346 (LPTLIALTTLLLPISPFMLMI).

This sequence belongs to the complex I subunit 2 family. In terms of assembly, core subunit of respiratory chain NADH dehydrogenase (Complex I) which is composed of 45 different subunits. Interacts with TMEM242.

The protein resides in the mitochondrion inner membrane. The enzyme catalyses a ubiquinone + NADH + 5 H(+)(in) = a ubiquinol + NAD(+) + 4 H(+)(out). Its function is as follows. Core subunit of the mitochondrial membrane respiratory chain NADH dehydrogenase (Complex I) which catalyzes electron transfer from NADH through the respiratory chain, using ubiquinone as an electron acceptor. Essential for the catalytic activity and assembly of complex I. The protein is NADH-ubiquinone oxidoreductase chain 2 of Homo sapiens (Human).